The chain runs to 363 residues: L-arabinitol 4-dehydrogenase (363 aa).

Residues cysteine 53, histidine 78, glutamate 79, cysteine 108, cysteine 111, cysteine 114, cysteine 122, and glutamate 163 each coordinate Zn(2+). Residues 190-191 (PI), aspartate 211, arginine 216, isoleucine 282, and 306-308 (QYR) contribute to the NAD(+) site.

This sequence belongs to the zinc-containing alcohol dehydrogenase family. As to quaternary structure, homotetramer. Requires Zn(2+) as cofactor.

It carries out the reaction L-arabinitol + NAD(+) = L-xylulose + NADH + H(+). It functions in the pathway carbohydrate degradation; L-arabinose degradation via L-arabinitol; D-xylulose 5-phosphate from L-arabinose (fungal route): step 2/5. In terms of biological role, catalyzes the NAD-dependent oxidation of L-arabinitol to L-xylulose in the fungal L-arabinose catabolic pathway. L-arabinose catabolism is important for using plant material as a carbon source. Not active on D-arabinitol, D-sorbitol and D-mannitol. The protein is L-arabinitol 4-dehydrogenase (ard-1) of Neurospora crassa (strain ATCC 24698 / 74-OR23-1A / CBS 708.71 / DSM 1257 / FGSC 987).